Consider the following 404-residue polypeptide: Ethanolamine-phosphate cytidylyltransferase (404 aa).

Residues 173–201 (YADSFGKPPHPTPAGDTLSSEVSSQCPGG) form a disordered region. The segment covering 189-201 (TLSSEVSSQCPGG) has biased composition (polar residues). CTP-binding positions include 239-240 (AF), 247-250 (HVDF), lysine 277, 325-328 (HGKT), and 354-358 (SGSDL). Residue serine 356 is modified to Phosphoserine. Phosphothreonine occurs at positions 359 and 360.

It belongs to the cytidylyltransferase family.

It carries out the reaction phosphoethanolamine + CTP + H(+) = CDP-ethanolamine + diphosphate. It functions in the pathway phospholipid metabolism; phosphatidylethanolamine biosynthesis; phosphatidylethanolamine from ethanolamine: step 2/3. In terms of biological role, ethanolamine-phosphate cytidylyltransferase that catalyzes the second step in the synthesis of phosphatidylethanolamine (PE) from ethanolamine via the CDP-ethanolamine pathway. Phosphatidylethanolamine is a dominant inner-leaflet phospholipid in cell membranes, where it plays a role in membrane function by structurally stabilizing membrane-anchored proteins, and participates in important cellular processes such as cell division, cell fusion, blood coagulation, and apoptosis. This chain is Ethanolamine-phosphate cytidylyltransferase (Pcyt2), found in Mus musculus (Mouse).